Reading from the N-terminus, the 163-residue chain is Peptide methionine sulfoxide reductase MsrA 1 (163 aa).

Residue cysteine 21 is part of the active site.

This sequence belongs to the MsrA Met sulfoxide reductase family.

The catalysed reaction is L-methionyl-[protein] + [thioredoxin]-disulfide + H2O = L-methionyl-(S)-S-oxide-[protein] + [thioredoxin]-dithiol. The enzyme catalyses [thioredoxin]-disulfide + L-methionine + H2O = L-methionine (S)-S-oxide + [thioredoxin]-dithiol. In terms of biological role, has an important function as a repair enzyme for proteins that have been inactivated by oxidation. Catalyzes the reversible oxidation-reduction of methionine sulfoxide in proteins to methionine. In Nostoc sp. (strain PCC 7120 / SAG 25.82 / UTEX 2576), this protein is Peptide methionine sulfoxide reductase MsrA 1 (msrA1).